The primary structure comprises 295 residues: MRARHRVALKVLADLRSWAAEYPQVLEATPIEALAISTAAISPWRGANELRLSAPDVRCGPTPLDDHVEQNVRSLDELDDLFGRCEAIVRGGDRDDGHPLLASLSGWQSALERAPHYPKLAGLWGDRFAEALRGERYDWTAGLARDRGEGPSDPQEYLTYAASSNAWITHFPRWATSDRDDLLDGLPVLDNALEAIEVAVRLSNDLATFERERAEPGQNNILMYDTSPDWVHDELDRHSRKAQEQLDPLATAGFPPAVELLRLLDWSVTFYSGADFRGWGSDRDLTGPSGLPSDM.

Belongs to the terpene synthase family. As to quaternary structure, monomer. It depends on a divalent metal cation as a cofactor.

The enzyme catalyses ent-copalyl diphosphate = ent-pimara-9(11),15-diene + diphosphate. It functions in the pathway antibiotic biosynthesis. Functionally, involved in viguiepinol biosynthesis. Catalyzes the conversion of copalyl diphosphate (ent-CDP) into pimara-9(11),15-diene (PMD). The sequence is that of Ent-pimara-9(11),15-diene synthase from Streptomyces sp. (strain KO-3988).